A 246-amino-acid chain; its full sequence is Small ribosomal subunit protein uS3 (246 aa).

Residues Leu-23–Ala-94 form the KH type-2 domain. The disordered stretch occupies residues Gly-201–Leu-246. 2 stretches are compositionally biased toward basic and acidic residues: residues Glu-214–Tyr-228 and Pro-236–Leu-246. Phosphothreonine is present on residues Thr-223 and Thr-226. At Ser-241 the chain carries Phosphoserine.

Belongs to the universal ribosomal protein uS3 family. As to quaternary structure, interacts with LTV1; the interaction is RNA-independent.

It is found in the cytoplasm. The protein localises to the nucleus. Its function is as follows. Has DNA repair activity directed towards the mutagenic lesions 8-oxoguanine and abasic sites in DNA. It can cleave DNA containing 8-oxoguanine residues efficiently. Also acts as an ap lyase, cleaving phosphodiester bonds via a beta,delta elimination reaction. The chain is Small ribosomal subunit protein uS3 (RpS3) from Drosophila melanogaster (Fruit fly).